The following is a 165-amino-acid chain: UPF0114 protein in repA1-repA2 intergenic region (165 aa).

3 helical membrane passes run 10–32, 53–75, and 136–155; these read YASR…LLTL, LILI…MVMF, and IMWC…GMAC.

The protein belongs to the UPF0114 family.

Its subcellular location is the cell membrane. This Buchnera aphidicola subsp. Geoica urticularia protein is UPF0114 protein in repA1-repA2 intergenic region.